An 88-amino-acid chain; its full sequence is Small ribosomal subunit protein uS15 (88 aa).

It belongs to the universal ribosomal protein uS15 family. In terms of assembly, part of the 30S ribosomal subunit. Forms a bridge to the 50S subunit in the 70S ribosome, contacting the 23S rRNA.

Its function is as follows. One of the primary rRNA binding proteins, it binds directly to 16S rRNA where it helps nucleate assembly of the platform of the 30S subunit by binding and bridging several RNA helices of the 16S rRNA. In terms of biological role, forms an intersubunit bridge (bridge B4) with the 23S rRNA of the 50S subunit in the ribosome. This is Small ribosomal subunit protein uS15 from Borrelia garinii subsp. bavariensis (strain ATCC BAA-2496 / DSM 23469 / PBi) (Borreliella bavariensis).